The primary structure comprises 213 residues: ATP-dependent Clp protease proteolytic subunit (213 aa).

The active-site Nucleophile is Ser114. Residue His139 is part of the active site.

It belongs to the peptidase S14 family. Fourteen ClpP subunits assemble into 2 heptameric rings which stack back to back to give a disk-like structure with a central cavity, resembling the structure of eukaryotic proteasomes.

The protein localises to the cytoplasm. It catalyses the reaction Hydrolysis of proteins to small peptides in the presence of ATP and magnesium. alpha-casein is the usual test substrate. In the absence of ATP, only oligopeptides shorter than five residues are hydrolyzed (such as succinyl-Leu-Tyr-|-NHMec, and Leu-Tyr-Leu-|-Tyr-Trp, in which cleavage of the -Tyr-|-Leu- and -Tyr-|-Trp bonds also occurs).. In terms of biological role, cleaves peptides in various proteins in a process that requires ATP hydrolysis. Has a chymotrypsin-like activity. Plays a major role in the degradation of misfolded proteins. The protein is ATP-dependent Clp protease proteolytic subunit of Methylobacillus flagellatus (strain ATCC 51484 / DSM 6875 / VKM B-1610 / KT).